A 184-amino-acid polypeptide reads, in one-letter code: MIDKAEIMDESAIMRAITRIAHEIIEKNKGVDNLALIGIQRRGVPLAKMIAEKIKGVEGKSVPVGILDITLYRDDLSMLSEHPIINGTQIDFPITDKKIVLVDDVLYTGRTVRAAIDALMDAGRPKMVQLAVLIDRGHRELPIRPDYVGKNVPTSRLEVVNVKLYEIDGVNCVTISDIEKGVRH.

The short motif at 99 to 111 (IVLVDDVLYTGRT) is the PRPP-binding element.

The protein belongs to the purine/pyrimidine phosphoribosyltransferase family. PyrR subfamily. As to quaternary structure, homodimer and homohexamer; in equilibrium.

It catalyses the reaction UMP + diphosphate = 5-phospho-alpha-D-ribose 1-diphosphate + uracil. Its function is as follows. Regulates transcriptional attenuation of the pyrimidine nucleotide (pyr) operon by binding in a uridine-dependent manner to specific sites on pyr mRNA. This disrupts an antiterminator hairpin in the RNA and favors formation of a downstream transcription terminator, leading to a reduced expression of downstream genes. Also displays a weak uracil phosphoribosyltransferase activity which is not physiologically significant. The sequence is that of Bifunctional protein PyrR from Acetivibrio thermocellus (strain ATCC 27405 / DSM 1237 / JCM 9322 / NBRC 103400 / NCIMB 10682 / NRRL B-4536 / VPI 7372) (Clostridium thermocellum).